The chain runs to 67 residues: MASKIFFVLAVFLVMSAVLPESFAGCKKLNSYCTRQHRECCHGLVCRRPDYGIGRGILWKCTRARKG.

The first 24 residues, 1–24, serve as a signal peptide directing secretion; it reads MASKIFFVLAVFLVMSAVLPESFA. Intrachain disulfides connect C26/C41, C33/C46, and C40/C61. At K66 the chain carries Lysine amide.

Its subcellular location is the secreted. The protein localises to the nematocyst. Alpha-toxins act on postsynaptic membranes, they bind to the nicotinic acetylcholine receptors (nAChR) and thus inhibit them. This toxin shows inhibition against mouse alpha-1-beta-1-delta-epsilon (CHRNA1-CHRNB1-CHRND-CHRNE) (IC(50)=1215 nM), rat alpha-3-beta-4/CHRNA3-CHRNB4 (IC(50)=5.173 uM), rat alpha-7/CHRNA7 (IC(50)=4.786 uM), human alpha-7/CHRNA7 (IC(50)=8.869 uM), and rat alpha-9-alpha-10/CHRNA9-CHRNA10 (IC(50)=202 nM). Also competes with alpha-bungarotoxin for binding to orthosteric sites on muscle-type T.carlifornicus (IC(50)=256 nM) and human alpha-7/CHRNA7 nAChRs (IC(50)=19.81 uM). In Metridium senile (Brown sea anemone), this protein is Alpha-actitoxin-Ms11a-3.